A 301-amino-acid polypeptide reads, in one-letter code: Ribonuclease Z (301 aa).

Residues His-61, His-63, Asp-65, His-66, His-140, Asp-211, and His-269 each contribute to the Zn(2+) site. The active-site Proton acceptor is Asp-65.

This sequence belongs to the RNase Z family. As to quaternary structure, homodimer. Requires Zn(2+) as cofactor.

It catalyses the reaction Endonucleolytic cleavage of RNA, removing extra 3' nucleotides from tRNA precursor, generating 3' termini of tRNAs. A 3'-hydroxy group is left at the tRNA terminus and a 5'-phosphoryl group is left at the trailer molecule.. In terms of biological role, zinc phosphodiesterase, which displays some tRNA 3'-processing endonuclease activity. Probably involved in tRNA maturation, by removing a 3'-trailer from precursor tRNA. The polypeptide is Ribonuclease Z (Bradyrhizobium sp. (strain ORS 278)).